Here is a 336-residue protein sequence, read N- to C-terminus: Ornithine carbamoyltransferase, catabolic (336 aa).

Carbamoyl phosphate contacts are provided by residues 62-65 (STRT), glutamine 89, arginine 113, and 140-143 (HPTQ). L-ornithine contacts are provided by residues asparagine 172, aspartate 236, and 240–241 (SM). Residues 277–278 (CL) and arginine 322 contribute to the carbamoyl phosphate site.

Belongs to the aspartate/ornithine carbamoyltransferase superfamily. OTCase family.

Its subcellular location is the cytoplasm. It carries out the reaction carbamoyl phosphate + L-ornithine = L-citrulline + phosphate + H(+). Its pathway is amino-acid degradation; L-arginine degradation via ADI pathway; carbamoyl phosphate from L-arginine: step 2/2. Reversibly catalyzes the transfer of the carbamoyl group from carbamoyl phosphate (CP) to the N(epsilon) atom of ornithine (ORN) to produce L-citrulline. This is Ornithine carbamoyltransferase, catabolic from Staphylococcus aureus (strain MRSA252).